The sequence spans 365 residues: Mannose-1-phosphate guanylyltransferase catalytic subunit beta (365 aa).

Residues 2–221 (KALILVGGYG…PGFWMDVGQP (220 aa)) form a substrate-binding domain region. Asp-109 contacts GDP-alpha-D-mannose. Asp-109 contributes to the Mg(2+) binding site. Residue Lys-161 is part of the active site. Position 217 (Asp-217) interacts with GDP-alpha-D-mannose. A Mg(2+)-binding site is contributed by Asp-217. The interval 244-365 (ETGSNIHPTA…VNVPSKDIIM (122 aa)) is hexapeptide repeat domain.

This sequence belongs to the transferase hexapeptide repeat family. As to quaternary structure, component of the GMPPA-GMPPB mannose-1-phosphate guanylyltransferase complex composed of 4 GMPPA subunits and 8 tag-335/GMPPB subunits; the complex is organized into three layers, a central layer made up of 2 GMPPA dimers sandwiched between two layers each made up of 2 tag-335/GMPPB dimers. Catalytic activity of tag-335/GMPPB is reduced when part of the complex and binding of GDP-alpha-D-Mannose by GMPPA induces allosteric feedback inhibition of tag-335/GMPPB. Mg(2+) is required as a cofactor.

It catalyses the reaction alpha-D-mannose 1-phosphate + GTP + H(+) = GDP-alpha-D-mannose + diphosphate. The protein operates within nucleotide-sugar biosynthesis; GDP-alpha-D-mannose biosynthesis; GDP-alpha-D-mannose from alpha-D-mannose 1-phosphate (GTP route): step 1/1. With respect to regulation, enzyme activity is reduced by incorporation into the GMPPA-GMPPB mannose-1-phosphate guanylyltransferase complex. Allosterically inhibited, when part of the GMPPA-GMPPB complex, by GDP-alpha-D-mannose binding to GMPPA. Functionally, catalytic subunit of the GMPPA-GMPPB mannose-1-phosphate guanylyltransferase complex. Catalyzes the formation of GDP-mannose, an essential precursor of glycan moieties of glycoproteins and glycolipids. Can catalyze the reverse reaction in vitro. Together with GMPPA regulates GDP-alpha-D-mannose levels. This is Mannose-1-phosphate guanylyltransferase catalytic subunit beta (tag-335) from Caenorhabditis elegans.